The sequence spans 260 residues: Ribonuclease HII (260 aa).

The RNase H type-2 domain maps to 71–259; the sequence is RRIAGIDEAG…VREVLKASEQ (189 aa). Residues aspartate 77, glutamate 78, and aspartate 169 each coordinate a divalent metal cation.

This sequence belongs to the RNase HII family. Mn(2+) is required as a cofactor. Mg(2+) serves as cofactor.

The protein resides in the cytoplasm. It catalyses the reaction Endonucleolytic cleavage to 5'-phosphomonoester.. In terms of biological role, endonuclease that specifically degrades the RNA of RNA-DNA hybrids. The sequence is that of Ribonuclease HII from Geobacillus kaustophilus (strain HTA426).